Reading from the N-terminus, the 158-residue chain is SsrA-binding protein (158 aa).

The tract at residues 135-158 (DKRKTLKDRDWERDKQRGFKKDLD) is disordered. Over residues 141–158 (KDRDWERDKQRGFKKDLD) the composition is skewed to basic and acidic residues.

Belongs to the SmpB family.

It localises to the cytoplasm. Its function is as follows. Required for rescue of stalled ribosomes mediated by trans-translation. Binds to transfer-messenger RNA (tmRNA), required for stable association of tmRNA with ribosomes. tmRNA and SmpB together mimic tRNA shape, replacing the anticodon stem-loop with SmpB. tmRNA is encoded by the ssrA gene; the 2 termini fold to resemble tRNA(Ala) and it encodes a 'tag peptide', a short internal open reading frame. During trans-translation Ala-aminoacylated tmRNA acts like a tRNA, entering the A-site of stalled ribosomes, displacing the stalled mRNA. The ribosome then switches to translate the ORF on the tmRNA; the nascent peptide is terminated with the 'tag peptide' encoded by the tmRNA and targeted for degradation. The ribosome is freed to recommence translation, which seems to be the essential function of trans-translation. The sequence is that of SsrA-binding protein from Psychrobacter cryohalolentis (strain ATCC BAA-1226 / DSM 17306 / VKM B-2378 / K5).